A 349-amino-acid polypeptide reads, in one-letter code: Phosphoribosylformylglycinamidine cyclo-ligase (349 aa).

It belongs to the AIR synthase family.

The protein resides in the cytoplasm. It catalyses the reaction 2-formamido-N(1)-(5-O-phospho-beta-D-ribosyl)acetamidine + ATP = 5-amino-1-(5-phospho-beta-D-ribosyl)imidazole + ADP + phosphate + H(+). Its pathway is purine metabolism; IMP biosynthesis via de novo pathway; 5-amino-1-(5-phospho-D-ribosyl)imidazole from N(2)-formyl-N(1)-(5-phospho-D-ribosyl)glycinamide: step 2/2. The polypeptide is Phosphoribosylformylglycinamidine cyclo-ligase (Bordetella pertussis (strain Tohama I / ATCC BAA-589 / NCTC 13251)).